We begin with the raw amino-acid sequence, 282 residues long: MTDKYAVFGNPISHSKSPFIHGQFAAPTQELLTYEAILAPVDGFEASLTAFFNAGGKGANVTVPFKEQAFALCDSLSPEAKLAGAVNTLSLLADGTIRGDNTDGLGLVADLIANLGSLQGKRVLLIGAGGAARGCILPLLNAGIAQLTISNRTHTKAQLLVDIFTSVDNGAFANRVTAVEMNELVGEFDIIINSTSASLAGELPPVPAHIITPQTVCYDMMYGASVTAFNQWALSQGAAKVIDGLGMLVGQAAKSFTLWRGVEPDTQVVLTLLRDKLKAEPK.

Shikimate contacts are provided by residues 15-17 (SKS) and T62. K66 serves as the catalytic Proton acceptor. Residues N87 and D103 each contribute to the shikimate site. NADP(+) is bound by residues 127-131 (GAGGA), 151-156 (NRTHTK), and M220. Y222 is a binding site for shikimate. Residue G244 coordinates NADP(+).

Belongs to the shikimate dehydrogenase family. In terms of assembly, homodimer.

The enzyme catalyses shikimate + NADP(+) = 3-dehydroshikimate + NADPH + H(+). It participates in metabolic intermediate biosynthesis; chorismate biosynthesis; chorismate from D-erythrose 4-phosphate and phosphoenolpyruvate: step 4/7. Functionally, involved in the biosynthesis of the chorismate, which leads to the biosynthesis of aromatic amino acids. Catalyzes the reversible NADPH linked reduction of 3-dehydroshikimate (DHSA) to yield shikimate (SA). In Shewanella putrefaciens (strain CN-32 / ATCC BAA-453), this protein is Shikimate dehydrogenase (NADP(+)).